The chain runs to 302 residues: Small ribosomal subunit protein uS3 (302 aa).

The 70-residue stretch at 17 to 86 folds into the KH type-2 domain; the sequence is IDEFFAEELA…DPQIDVQEVE (70 aa). The disordered stretch occupies residues 222–302; it reads EDADAEDADA…EMDDEDGGAE (81 aa).

Belongs to the universal ribosomal protein uS3 family. In terms of assembly, part of the 30S ribosomal subunit.

Binds the lower part of the 30S subunit head. In Halobacterium salinarum (strain ATCC 700922 / JCM 11081 / NRC-1) (Halobacterium halobium), this protein is Small ribosomal subunit protein uS3.